The sequence spans 393 residues: MFRYLTAGESHGPQLTAIIEGIPAGLSLSEEQINIDLARRQCGYGRGGRMLIEKDQVEILSGVRWGKTIGSPITLCVRNRDWENWHEKMSPHERFHDDKIRVTRSRPGHADLPGAMKYNHHDVRNILERSSARETAVRVAVGAVAKALLSQFEIEVCGFVAELGGIKAIRPSLPLAALKDMAAKSELFTYDKSVEEEMKRLIDTVRDEGDTVGGVIEVNAVGVPPGLGSHVQWDRKLDARLAMAVLSIQAFKGVEIGIGFQAAASTGSKVHDEIFYDSARIAHGEQSGFYRKSNNAGGIEGGISNGEEIVVRAAMKPIPTLYKPLRSVDIVSKEPYEATVERSDVCAVPAASVVAEAVVAIELADAFMVKFGGDSITEIKRNYQSYLDYLRAF.

The NADP(+) site is built by Arg-40 and Arg-46. Residues 129-131 (RSS), 249-250 (QA), Gly-301, 316-320 (KPIPT), and Arg-342 contribute to the FMN site.

The protein belongs to the chorismate synthase family. In terms of assembly, homotetramer. It depends on FMNH2 as a cofactor.

It carries out the reaction 5-O-(1-carboxyvinyl)-3-phosphoshikimate = chorismate + phosphate. The protein operates within metabolic intermediate biosynthesis; chorismate biosynthesis; chorismate from D-erythrose 4-phosphate and phosphoenolpyruvate: step 7/7. In terms of biological role, catalyzes the anti-1,4-elimination of the C-3 phosphate and the C-6 proR hydrogen from 5-enolpyruvylshikimate-3-phosphate (EPSP) to yield chorismate, which is the branch point compound that serves as the starting substrate for the three terminal pathways of aromatic amino acid biosynthesis. This reaction introduces a second double bond into the aromatic ring system. The protein is Chorismate synthase of Geotalea uraniireducens (strain Rf4) (Geobacter uraniireducens).